The chain runs to 459 residues: Peptidyl-prolyl cis-trans isomerase FKBP4 (459 aa).

N-acetylmethionine; in peptidyl-prolyl cis-trans isomerase FKBP4; alternate is present on M1. A disordered region spans residues 1-24 (MTAEEMKATESGAQSAPLPMEGVD). T2 carries the post-translational modification N-acetylthreonine; in peptidyl-prolyl cis-trans isomerase FKBP4, N-terminally processed; partial. Residues 50–138 (GDRVFVHYTG…VFEVELFEFK (89 aa)) enclose the PPIase FKBP-type 1 domain. A Phosphothreonine; by CK2 modification is found at T143. The PPIase FKBP-type 2 domain maps to 167-253 (GAIVEVALEG…KYELHLKSFE (87 aa)). Y220 is subject to Phosphotyrosine. The interval 267–400 (LEQSTIVKER…TQLAVCQQRI (134 aa)) is interaction with tubulin. TPR repeat units follow at residues 270-303 (STIV…LEYE), 319-352 (LASH…DSNN), and 353-386 (EKGL…YPNN). K282 is modified (N6-acetyllysine). At R373 the chain carries Omega-N-methylarginine. The interval 421-459 (EENKAKAEASSGDHPTDTEMKEEQKSNTAGSQSQVETEA) is disordered. A compositionally biased stretch (basic and acidic residues) spans 434–445 (HPTDTEMKEEQK). T436 is modified (phosphothreonine). K441 is covalently cross-linked (Glycyl lysine isopeptide (Lys-Gly) (interchain with G-Cter in SUMO1)). The segment covering 446-459 (SNTAGSQSQVETEA) has biased composition (polar residues). Residues S451 and S453 each carry the phosphoserine modification.

Homodimer. Interacts with GLMN. Associates with HSP90AA1 and HSP70 in steroid hormone receptor complexes. Also interacts with peroxisomal phytanoyl-CoA alpha-hydroxylase (PHYH). Interacts with NR3C1 and dynein. Interacts with HSF1 in the HSP90 complex. Associates with tubulin. Interacts with MAPT/TAU. Interacts (via TPR domain) with S100A1, S100A2 and S100A6; the interaction is Ca(2+) dependent. Interaction with S100A1 and S100A2 (but not with S100A6) leads to inhibition of FKBP4-HSP90 interaction. Interacts with dynein; causes partially NR3C1 transport to the nucleus. Phosphorylation by CK2 results in loss of HSP90 binding activity. As to expression, widely expressed.

It is found in the cytoplasm. The protein resides in the cytosol. It localises to the mitochondrion. Its subcellular location is the nucleus. The protein localises to the cytoskeleton. It is found in the cell projection. The protein resides in the axon. It carries out the reaction [protein]-peptidylproline (omega=180) = [protein]-peptidylproline (omega=0). Inhibited by FK506. In terms of biological role, immunophilin protein with PPIase and co-chaperone activities. Component of steroid receptors heterocomplexes through interaction with heat-shock protein 90 (HSP90). May play a role in the intracellular trafficking of heterooligomeric forms of steroid hormone receptors between cytoplasm and nuclear compartments. The isomerase activity controls neuronal growth cones via regulation of TRPC1 channel opening. Also acts as a regulator of microtubule dynamics by inhibiting MAPT/TAU ability to promote microtubule assembly. May have a protective role against oxidative stress in mitochondria. This is Peptidyl-prolyl cis-trans isomerase FKBP4 (FKBP4) from Homo sapiens (Human).